We begin with the raw amino-acid sequence, 227 residues long: Zinc finger protein 511 (227 aa).

3 C2H2-type zinc fingers span residues 80–105 (FTCQ…HMMH), 107–130 (NTCS…LEWH), and 144–169 (YQCL…VRLH). Residues 180 to 204 (PKTNRGPAMPAAADAATRAPTDDSD) are disordered. Over residues 186–198 (PAMPAAADAATRA) the composition is skewed to low complexity.

Belongs to the krueppel C2H2-type zinc-finger protein family.

The protein localises to the nucleus. May be involved in transcriptional regulation. In Mus musculus (Mouse), this protein is Zinc finger protein 511 (Znf511).